The chain runs to 169 residues: Neurotensin/neuromedin N (169 aa).

The first 22 residues, 1 to 22, serve as a signal peptide directing secretion; that stretch reads MRGMNLQLVCLTLLAFSSWSLC.

Belongs to the neurotensin family. Interacts with NTSR1. Interacts with SORT1. Interacts with SORL1. In terms of processing, neurotensin is cleaved and degraded by Angiotensin-converting enzyme (ACE) and neprilysin (MME).

It localises to the secreted. Its subcellular location is the cytoplasmic vesicle. It is found in the secretory vesicle. Its function is as follows. Neurotensin may play an endocrine or paracrine role in the regulation of fat metabolism. It causes contraction of smooth muscle. The sequence is that of Neurotensin/neuromedin N (Nts) from Mus musculus (Mouse).